The following is a 368-amino-acid chain: snRNA-activating protein complex subunit 1 (368 aa).

Residues 1 to 168 (MGTPPGLQTD…EEFKDPSDRV (168 aa)) form an SNAPC3-binding region. The SNAPC4-binding stretch occupies residues 164–268 (PSDRVMKLIT…AESLAKIKSK (105 aa)). Disordered regions lie at residues 224 to 257 (QQWH…ERCE) and 275 to 368 (QASK…RRKH). The span at 238-257 (KTNDGEEKMEGNSQETERCE) shows a compositional bias: basic and acidic residues. A phosphoserine mark is found at serine 289 and serine 290.

As to quaternary structure, part of the SNAPc complex composed of 5 subunits: SNAPC1, SNAPC2, SNAPC3, SNAPC4 and SNAPC5. SNAPC1 interacts with SNAPC3, SNAPC4 and TBP.

It is found in the nucleus. Its function is as follows. Part of the SNAPc complex required for the transcription of both RNA polymerase II and III small-nuclear RNA genes. Binds to the proximal sequence element (PSE), a non-TATA-box basal promoter element common to these 2 types of genes. Recruits TBP and BRF2 to the U6 snRNA TATA box. This chain is snRNA-activating protein complex subunit 1 (SNAPC1), found in Homo sapiens (Human).